Here is a 36-residue protein sequence, read N- to C-terminus: Photosystem I reaction center subunit VIII (36 aa).

The helical transmembrane segment at 6–26 (LPSIFVPLVGLVFPAIAMASL) threads the bilayer.

It belongs to the PsaI family.

The protein resides in the plastid. It localises to the chloroplast thylakoid membrane. In terms of biological role, may help in the organization of the PsaL subunit. This chain is Photosystem I reaction center subunit VIII, found in Drimys granadensis.